Consider the following 306-residue polypeptide: MVTAKMVKELRERTGAGMMDCKKALTETDGDMEKAVEFLREKGLAAAAKKAGRVAAEGLVTTYLSEDNKTAVALEVNCETDFVSINESFVEFTNSIAKQIATSDVKDVEELLESKYIADENVTVKEALTALIAKIGENMNIRRFEKLTIDNGVINGYVHGEGRIGVLVELGCEKESDILMPLAKDIAMQVAAANPLFLDETSVDEEALDKEREIYRAQALNEGKPEKIVEKMVEGRVKKYLKEVCLIDQVWVKNSDYTIKKLLEEKSKEVGSPITLCKFVRFERGEGLEKKEENFAEEVQRQMNQK.

Residues 80-83 (TDFV) form an involved in Mg(2+) ion dislocation from EF-Tu region.

This sequence belongs to the EF-Ts family.

It localises to the cytoplasm. Functionally, associates with the EF-Tu.GDP complex and induces the exchange of GDP to GTP. It remains bound to the aminoacyl-tRNA.EF-Tu.GTP complex up to the GTP hydrolysis stage on the ribosome. In Clostridium novyi (strain NT), this protein is Elongation factor Ts.